Reading from the N-terminus, the 226-residue chain is ATP synthase F(0) complex subunit a (226 aa).

6 helical membrane-spanning segments follow: residues 9–29 (FITP…FPAM), 68–88 (WALM…LGLV), 97–117 (QLSM…ITGF), 138–158 (IPML…ALAI), 164–184 (ITAG…LTSI), and 201–223 (ILEF…LYLH).

The protein belongs to the ATPase A chain family. As to quaternary structure, component of the ATP synthase complex composed at least of ATP5F1A/subunit alpha, ATP5F1B/subunit beta, ATP5MC1/subunit c (homooctomer), MT-ATP6/subunit a, MT-ATP8/subunit 8, ATP5ME/subunit e, ATP5MF/subunit f, ATP5MG/subunit g, ATP5MK/subunit k, ATP5MJ/subunit j, ATP5F1C/subunit gamma, ATP5F1D/subunit delta, ATP5F1E/subunit epsilon, ATP5PF/subunit F6, ATP5PB/subunit b, ATP5PD/subunit d, ATP5PO/subunit OSCP. ATP synthase complex consists of a soluble F(1) head domain (subunits alpha(3) and beta(3)) - the catalytic core - and a membrane F(0) domain - the membrane proton channel (subunits c, a, 8, e, f, g, k and j). These two domains are linked by a central stalk (subunits gamma, delta, and epsilon) rotating inside the F1 region and a stationary peripheral stalk (subunits F6, b, d, and OSCP). Interacts with DNAJC30; interaction is direct.

It is found in the mitochondrion inner membrane. It catalyses the reaction H(+)(in) = H(+)(out). Subunit a, of the mitochondrial membrane ATP synthase complex (F(1)F(0) ATP synthase or Complex V) that produces ATP from ADP in the presence of a proton gradient across the membrane which is generated by electron transport complexes of the respiratory chain. ATP synthase complex consist of a soluble F(1) head domain - the catalytic core - and a membrane F(1) domain - the membrane proton channel. These two domains are linked by a central stalk rotating inside the F(1) region and a stationary peripheral stalk. During catalysis, ATP synthesis in the catalytic domain of F(1) is coupled via a rotary mechanism of the central stalk subunits to proton translocation. With the subunit c (ATP5MC1), forms the proton-conducting channel in the F(0) domain, that contains two crucial half-channels (inlet and outlet) that facilitate proton movement from the mitochondrial intermembrane space (IMS) into the matrix. Protons are taken up via the inlet half-channel and released through the outlet half-channel, following a Grotthuss mechanism. This is ATP synthase F(0) complex subunit a from Dugong dugon (Dugong).